The chain runs to 87 residues: Small ribosomal subunit protein bS21 (87 aa).

A compositionally biased stretch (basic and acidic residues) spans 47 to 63; it reads YEKPSEKRARQKAEAVR. The tract at residues 47–87 is disordered; it reads YEKPSEKRARQKAEAVRRARKLARKRAQREGLLPMPKKPGR. Residues 64–73 show a composition bias toward basic residues; the sequence is RARKLARKRA.

The protein belongs to the bacterial ribosomal protein bS21 family.

The chain is Small ribosomal subunit protein bS21 from Caulobacter vibrioides (strain ATCC 19089 / CIP 103742 / CB 15) (Caulobacter crescentus).